The sequence spans 366 residues: Dual-specificity RNA methyltransferase RlmN (366 aa).

Catalysis depends on Glu-91, which acts as the Proton acceptor. Residues 97–333 form the Radical SAM core domain; the sequence is EDDRGTLCVS…TTVRKTRGED (237 aa). A disulfide bridge links Cys-104 with Cys-338. [4Fe-4S] cluster contacts are provided by Cys-111, Cys-115, and Cys-118. Residues 164–165, Ser-196, 218–220, and Asn-295 contribute to the S-adenosyl-L-methionine site; these read GE and SLH. Cys-338 serves as the catalytic S-methylcysteine intermediate.

Belongs to the radical SAM superfamily. RlmN family. Requires [4Fe-4S] cluster as cofactor.

The protein resides in the cytoplasm. The catalysed reaction is adenosine(2503) in 23S rRNA + 2 reduced [2Fe-2S]-[ferredoxin] + 2 S-adenosyl-L-methionine = 2-methyladenosine(2503) in 23S rRNA + 5'-deoxyadenosine + L-methionine + 2 oxidized [2Fe-2S]-[ferredoxin] + S-adenosyl-L-homocysteine. The enzyme catalyses adenosine(37) in tRNA + 2 reduced [2Fe-2S]-[ferredoxin] + 2 S-adenosyl-L-methionine = 2-methyladenosine(37) in tRNA + 5'-deoxyadenosine + L-methionine + 2 oxidized [2Fe-2S]-[ferredoxin] + S-adenosyl-L-homocysteine. Its function is as follows. Specifically methylates position 2 of adenine 2503 in 23S rRNA and position 2 of adenine 37 in tRNAs. m2A2503 modification seems to play a crucial role in the proofreading step occurring at the peptidyl transferase center and thus would serve to optimize ribosomal fidelity. This chain is Dual-specificity RNA methyltransferase RlmN, found in Laribacter hongkongensis (strain HLHK9).